A 172-amino-acid polypeptide reads, in one-letter code: 3-phenylpropionate/cinnamic acid dioxygenase subunit beta (172 aa).

Belongs to the bacterial ring-hydroxylating dioxygenase beta subunit family. This dioxygenase system consists of four proteins: the two subunits of the hydroxylase component (HcaE and HcaF), a ferredoxin (HcaC) and a ferredoxin reductase (HcaD).

The enzyme catalyses 3-phenylpropanoate + NADH + O2 + H(+) = 3-(cis-5,6-dihydroxycyclohexa-1,3-dien-1-yl)propanoate + NAD(+). The catalysed reaction is (E)-cinnamate + NADH + O2 + H(+) = (2E)-3-(cis-5,6-dihydroxycyclohexa-1,3-dien-1-yl)prop-2-enoate + NAD(+). Its pathway is aromatic compound metabolism; 3-phenylpropanoate degradation. Functionally, part of the multicomponent 3-phenylpropionate dioxygenase. Converts 3-phenylpropionic acid (PP) and cinnamic acid (CI) into 3-phenylpropionate-dihydrodiol (PP-dihydrodiol) and cinnamic acid-dihydrodiol (CI-dihydrodiol), respectively. The sequence is that of 3-phenylpropionate/cinnamic acid dioxygenase subunit beta from Shigella boydii serotype 4 (strain Sb227).